The primary structure comprises 305 residues: MIFNRSVTYSNARLPYSKRSLYTKTRVLFFLKQKILSRVTTKMAIADLDKQPDSVSSVLKVFGILQALGEEREIGITELSQRVMMSKSTVYRFLQTMKSLGYVAQEGESEKYSLTLKLFELGAKALQNVDLIRSADIQMRELSALTRETIHLGALDEDSIVYIHKIDSMYNLRMYSRIGRRNPLHSTAIGKVLLAWRDREEVKEILSQVEFKRTTVHTIGSTEELLPQLDLVRQQGYGEDNEEQEEGLRCIAVPVFDRFGVVIAGLSISFPTIRFSEDNKHEYVAMLHTAARNISDQMGYHDYPF.

Residues 55 to 116 enclose the HTH iclR-type domain; it reads VSSVLKVFGI…GESEKYSLTL (62 aa). The H-T-H motif DNA-binding region spans 76–95; sequence ITELSQRVMMSKSTVYRFLQ. Positions 131–300 constitute an IclR-ED domain; the sequence is LIRSADIQMR…ARNISDQMGY (170 aa).

In terms of assembly, homodimer.

The protein localises to the cytoplasm. Transcriptional repressor that negatively regulates the expression of genes involved in pectinolysis and in pectinase secretion. Controls genes involved in pectin catabolism, including the pectinase genes (pelA, pelB, pelC, pelE), genes involved in pectin catabolism (kdgT, ogl, kduI-kdgF) and the outT gene involved in pectinase secretion. Acts by binding directly to KdgR binding sites (KdgR-box) in the gene operator/promoter region. The polypeptide is HTH-type transcriptional regulator KdgR (Dickeya chrysanthemi (Pectobacterium chrysanthemi)).